A 422-amino-acid polypeptide reads, in one-letter code: MLAWPAPLLPTLPGSGPVLTLHDTARGEVVPTTPDTTARMYVCGITPYDATHLGHAATYLAFDLVNRVWRDAGHAVHYVQNVTDIDDPLLERAERDGEDWVVLGMRETALFREDMTALRVLPPDDYVGAVESVPRIVAHVETLLDEGLAYVLDDGTGDVYHDIAQAPGFGSESGYDEATMLRFSAERGGDPDRPGKRNRLDPMLWRGRRPGEPSWPGPRGVAGRPGWHIECATIALETIGMGFDVQGGGSDLVFPHHEFSAVHAEALTATVTGEKLPFARAYVHAAMIGLDGEKMSKSRGNLVFVSKLRGEGVDPMAIRLALLAGHYRTDRAWTPDLLAGAEQRLATWRRAVTRDAGAPAAEVLQGLRERLADDLDSPGAIALVDAWAERTLAATADEQEEGAPTIVCDAVDALLGVALQGC.

Zn(2+) is bound at residue Cys-43. L-cysteinyl-5'-AMP is bound by residues 43–46 (CGIT), Thr-58, and 81–83 (NVT). Residues 45–55 (ITPYDATHLGH) carry the 'HIGH' region motif. The span at 185–200 (AERGGDPDRPGKRNRL) shows a compositional bias: basic and acidic residues. The interval 185–221 (AERGGDPDRPGKRNRLDPMLWRGRRPGEPSWPGPRGV) is disordered. The short motif at 186–191 (ERGGDP) is the 'ERGGDP' region element. L-cysteinyl-5'-AMP is bound at residue Trp-227. A Zn(2+)-binding site is contributed by Cys-231. 249–251 (GSD) serves as a coordination point for L-cysteinyl-5'-AMP. His-256 serves as a coordination point for Zn(2+). Ile-288 serves as a coordination point for L-cysteinyl-5'-AMP. A 'KMSKS' region motif is present at residues 294–298 (KMSKS).

The protein belongs to the class-I aminoacyl-tRNA synthetase family. MshC subfamily. As to quaternary structure, monomer. Zn(2+) serves as cofactor.

The enzyme catalyses 1D-myo-inositol 2-amino-2-deoxy-alpha-D-glucopyranoside + L-cysteine + ATP = 1D-myo-inositol 2-(L-cysteinylamino)-2-deoxy-alpha-D-glucopyranoside + AMP + diphosphate + H(+). Functionally, catalyzes the ATP-dependent condensation of GlcN-Ins and L-cysteine to form L-Cys-GlcN-Ins. The sequence is that of L-cysteine:1D-myo-inositol 2-amino-2-deoxy-alpha-D-glucopyranoside ligase from Geodermatophilus obscurus (strain ATCC 25078 / DSM 43160 / JCM 3152 / CCUG 61914 / KCC A-0152 / KCTC 9177 / NBRC 13315 / NRRL B-3577 / G-20).